The chain runs to 1136 residues: Collagen alpha-1(XIX) chain (1136 aa).

An N-terminal signal peptide occupies residues Met-1–Cys-23. Asn-47 is a glycosylation site (N-linked (GlcNAc...) asparagine). One can recognise a Laminin G-like domain in the interval Asn-47–Ala-231. 4 disordered regions span residues Asp-252–Leu-272, Glu-289–Pro-673, Gly-699–Asp-1005, and Ser-1043–Lys-1136. The span at Gly-254–Gly-266 shows a compositional bias: low complexity. A triple-helical region 1 (COL1) region spans residues Glu-289–Ser-348. 3 consecutive Collagen-like domains span residues Gly-292–Gly-346, Asp-347–Gly-388, and Ser-389–Gly-430. 2 stretches are compositionally biased toward basic and acidic residues: residues His-302 to Leu-314 and Ile-332 to Ala-344. The interval Gly-367–Pro-426 is triple-helical region 2 (COL2). Residues Thr-387–Lys-401 are compositionally biased toward low complexity. Positions Pro-414–Pro-426 are enriched in pro residues. The segment covering Leu-428 to Gly-437 has biased composition (low complexity). The tract at residues Gly-442–Ile-682 is triple-helical region 3 (COL3). A compositionally biased stretch (basic and acidic residues) spans His-472–Glu-490. 2 stretches are compositionally biased toward low complexity: residues Leu-511–Pro-523 and Pro-567–Gly-577. 6 Collagen-like domains span residues Gly-519 to Gly-577, Ile-578 to Gly-618, Gly-620 to Pro-673, Lys-722 to Gly-777, Leu-778 to Gly-810, and Gly-833 to Pro-891. The span at Pro-634–Leu-645 shows a compositional bias: low complexity. Residues Gln-694–Pro-812 form a triple-helical region 4 (COL4) region. 2 stretches are compositionally biased toward basic and acidic residues: residues Gly-714–Val-725 and Glu-737–Glu-758. Positions Pro-764–Thr-788 are enriched in low complexity. Pro residues-rich tracts occupy residues Pro-800–Val-811 and Tyr-834–Asp-846. The tract at residues Gly-827–Ala-1006 is triple-helical region 5 (COL5). Low complexity predominate over residues Pro-877–Pro-886. Residues Pro-937–Asp-948 show a composition bias toward basic and acidic residues. A Cell attachment site motif is present at residues Arg-946 to Asp-948. Positions Gly-1048–Pro-1105 are triple-helical region 6 (COL6). The span at Ser-1087–Ser-1101 shows a compositional bias: low complexity. Residues Pro-1102–Pro-1113 show a composition bias toward pro residues.

This sequence belongs to the fibril-associated collagens with interrupted helices (FACIT) family. As to quaternary structure, oligomer; disulfide-linked. In terms of processing, prolines at the third position of the tripeptide repeating unit (G-X-Y) are hydroxylated in some or all of the chains.

It localises to the secreted. It is found in the extracellular space. The protein localises to the extracellular matrix. In terms of biological role, may act as a cross-bridge between fibrils and other extracellular matrix molecules. Involved in skeletal myogenesis in the developing esophagus. May play a role in organization of the pericellular matrix or the sphinteric smooth muscle. The chain is Collagen alpha-1(XIX) chain from Mus musculus (Mouse).